Here is a 142-residue protein sequence, read N- to C-terminus: Large ribosomal subunit protein uL11 (142 aa).

Belongs to the universal ribosomal protein uL11 family. Part of the ribosomal stalk of the 50S ribosomal subunit. Interacts with L10 and the large rRNA to form the base of the stalk. L10 forms an elongated spine to which L12 dimers bind in a sequential fashion forming a multimeric L10(L12)X complex. One or more lysine residues are methylated.

In terms of biological role, forms part of the ribosomal stalk which helps the ribosome interact with GTP-bound translation factors. This Solibacter usitatus (strain Ellin6076) protein is Large ribosomal subunit protein uL11.